Here is a 227-residue protein sequence, read N- to C-terminus: Cytochrome c oxidase subunit 2 (227 aa).

The Mitochondrial intermembrane segment spans residues 1–26; sequence MATWSNLSIQDGASPLMEQLSFFHDD. A helical transmembrane segment spans residues 27–48; sequence HTMVVLLITVIVGYALSYMLFN. Over 49 to 62 the chain is Mitochondrial matrix; the sequence is AYTNRNMLHGHLIE. A helical transmembrane segment spans residues 63–82; it reads TIWTALPAITLIFIALPSLR. Residues 83–227 are Mitochondrial intermembrane-facing; the sequence is LLYLLDDSVD…LFIKWLSKMI (145 aa). Residues H161, C196, E198, C200, H204, and M207 each coordinate Cu cation. E198 contacts Mg(2+).

The protein belongs to the cytochrome c oxidase subunit 2 family. As to quaternary structure, component of the cytochrome c oxidase (complex IV, CIV), a multisubunit enzyme composed of a catalytic core of 3 subunits and several supernumerary subunits. The complex exists as a monomer or a dimer and forms supercomplexes (SCs) in the inner mitochondrial membrane with ubiquinol-cytochrome c oxidoreductase (cytochrome b-c1 complex, complex III, CIII). Requires Cu cation as cofactor.

The protein resides in the mitochondrion inner membrane. The enzyme catalyses 4 Fe(II)-[cytochrome c] + O2 + 8 H(+)(in) = 4 Fe(III)-[cytochrome c] + 2 H2O + 4 H(+)(out). Its function is as follows. Component of the cytochrome c oxidase, the last enzyme in the mitochondrial electron transport chain which drives oxidative phosphorylation. The respiratory chain contains 3 multisubunit complexes succinate dehydrogenase (complex II, CII), ubiquinol-cytochrome c oxidoreductase (cytochrome b-c1 complex, complex III, CIII) and cytochrome c oxidase (complex IV, CIV), that cooperate to transfer electrons derived from NADH and succinate to molecular oxygen, creating an electrochemical gradient over the inner membrane that drives transmembrane transport and the ATP synthase. Cytochrome c oxidase is the component of the respiratory chain that catalyzes the reduction of oxygen to water. Electrons originating from reduced cytochrome c in the intermembrane space (IMS) are transferred via the dinuclear copper A center (CU(A)) of subunit 2 and heme A of subunit 1 to the active site in subunit 1, a binuclear center (BNC) formed by heme A3 and copper B (CU(B)). The BNC reduces molecular oxygen to 2 water molecules using 4 electrons from cytochrome c in the IMS and 4 protons from the mitochondrial matrix. The protein is Cytochrome c oxidase subunit 2 (COII) of Schistocerca gregaria (Desert locust).